Reading from the N-terminus, the 609-residue chain is Proteasome-associated ATPase (609 aa).

The segment at Met-1–Ala-24 is disordered. Residues Ser-19 to Gln-96 are a coiled coil. ATP is bound at residue Gly-296 to Leu-301. Residues Tyr-608–Leu-609 form a docks into pockets in the proteasome alpha-ring region.

This sequence belongs to the AAA ATPase family. As to quaternary structure, homohexamer. Assembles into a hexameric ring structure that caps the 20S proteasome core. Strongly interacts with the prokaryotic ubiquitin-like protein Pup through a hydrophobic interface; the interacting region of ARC lies in its N-terminal coiled-coil domain. There is one Pup binding site per ARC hexamer ring. Upon ATP-binding, the C-terminus of ARC interacts with the alpha-rings of the proteasome core, possibly by binding to the intersubunit pockets.

Its pathway is protein degradation; proteasomal Pup-dependent pathway. ATPase which is responsible for recognizing, binding, unfolding and translocation of pupylated proteins into the bacterial 20S proteasome core particle. May be essential for opening the gate of the 20S proteasome via an interaction with its C-terminus, thereby allowing substrate entry and access to the site of proteolysis. Thus, the C-termini of the proteasomal ATPase may function like a 'key in a lock' to induce gate opening and therefore regulate proteolysis. This chain is Proteasome-associated ATPase, found in Mycobacterium ulcerans (strain Agy99).